The primary structure comprises 89 residues: Small ribosomal subunit protein uS15 (89 aa).

This sequence belongs to the universal ribosomal protein uS15 family. Part of the 30S ribosomal subunit. Forms a bridge to the 50S subunit in the 70S ribosome, contacting the 23S rRNA.

Functionally, one of the primary rRNA binding proteins, it binds directly to 16S rRNA where it helps nucleate assembly of the platform of the 30S subunit by binding and bridging several RNA helices of the 16S rRNA. Its function is as follows. Forms an intersubunit bridge (bridge B4) with the 23S rRNA of the 50S subunit in the ribosome. This Bifidobacterium adolescentis (strain ATCC 15703 / DSM 20083 / NCTC 11814 / E194a) protein is Small ribosomal subunit protein uS15.